A 178-amino-acid chain; its full sequence is Ribosome maturation factor RimP (178 aa).

The protein belongs to the RimP family.

It is found in the cytoplasm. In terms of biological role, required for maturation of 30S ribosomal subunits. The sequence is that of Ribosome maturation factor RimP from Streptococcus pyogenes serotype M5 (strain Manfredo).